Here is a 638-residue protein sequence, read N- to C-terminus: MPVKKYLLKCLHRLQKGPGYTYKELLVWYCNNTNTHGPKRIICEGPKKKAMWFLLTLLFACLVCWQWGVFIQTYLSWEVSVSLSMGFKTMNFPAVTVCNSSPFQYSKVKHLLKDLDELMEAVLEKILAPEASHSNTTRTLNFTIWNHTPLVLIDERNPDHPVVLNLFGDSHNSSNPAPGSTCNAQGCKVAMRLCSANGTVCTLRNFTSATQAVTEWYILQATNIFSQVLPQDLVGMGYAPDRIILACLFGTEPCSHRNFTPIFYPDYGNCYIFNWGMTEETLPSANPGTEFGLKLILDIGQEDYVPFLASTAGARLMLHEQRTYPFIREEGIYAMAGTETSIGVLVDKLQRKGEPYSPCTMNGSDVAIKNLYSVYNTTYSIQACLHSCFQDHMIRNCSCGHYLYPLPEGEKYCNNRDFPDWAYCYLNLQMSVTQRETCLSMCKESCNDTQYKMTISMADWPSEASEDWILHVLSQERDQSSNITLSRKGIVKLNIYFQEFNYRTIEESPANNIVWLLSNLGGQFGFWMGGSVLCLIEFGEIIIDFIWITIIKLVASCKGLRRRRPQAPYTGPPPTVAELVEAHTNFGFQPDTTSCRPHGEVYPDQQTLPIPGTPPPNYDSLRLQPLDTMESDSEVEAI.

Over 1-50 (MPVKKYLLKCLHRLQKGPGYTYKELLVWYCNNTNTHGPKRIICEGPKKKA) the chain is Cytoplasmic. A helical transmembrane segment spans residues 51 to 71 (MWFLLTLLFACLVCWQWGVFI). At 72–530 (QTYLSWEVSV…GGQFGFWMGG (459 aa)) the chain is on the extracellular side. Disulfide bonds link cysteine 98/cysteine 270, cysteine 182/cysteine 187, cysteine 194/cysteine 201, cysteine 247/cysteine 254, cysteine 359/cysteine 446, cysteine 384/cysteine 442, cysteine 388/cysteine 438, cysteine 397/cysteine 424, and cysteine 399/cysteine 413. 2 N-linked (GlcNAc...) asparagine glycosylation sites follow: asparagine 135 and asparagine 141. N-linked (GlcNAc...) asparagine glycosylation is present at asparagine 205. Residues 531-551 (SVLCLIEFGEIIIDFIWITII) form a helical membrane-spanning segment. Residues 552 to 638 (KLVASCKGLR…MESDSEVEAI (87 aa)) are Cytoplasmic-facing. Residues 594–620 (SCRPHGEVYPDQQTLPIPGTPPPNYDS) form a disordered region. The PY motif; recruits WW domain-containing proteins and is thereby required for ubiquitination and inhibition of the channel by NEDD4 and NEDD4L signature appears at 614–618 (PPPNY). Phosphoserine occurs at positions 631 and 633.

It belongs to the amiloride-sensitive sodium channel (TC 1.A.6) family. SCNN1B subfamily. As to quaternary structure, component of the heterotrimeric epithelial sodium channel (ENaC) composed of an alpha/SCNN1A, a beta/SCNN1B and a gamma/SCNN1G subunit. Interacts with WWP1 (via WW domains). Interacts with WWP2 (via WW domains); inhibits the channel. Interacts with the full-length immature form of PCSK9 (pro-PCSK9). Interacts (N-glycosylated) with BPIFA1; the interaction is direct and inhibits the proteolytic processing of SCNN1A and SCNN1G and the activation of ENaC. Ubiquitinated. Can be ubiquitinated at multiple sites and undergo monoubiquitination and polyubiquitination. Ubiquitination by NEDD4 or NEDD4L inhibits the ENaC channel through endocytosis, intracellular retention and degradation of its individual subunits. However, some studies could not confirm the ubiquitination of this subunit of the ENaC. In terms of processing, N-glycosylated. N-glycosylation is required for interaction with BPIFA1. Post-translationally, phosphorylated on serine and threonine residues. Aldosterone and insulin increase the basal level of phosphorylation. As to expression, lung and kidney.

Its subcellular location is the apical cell membrane. It localises to the cytoplasmic vesicle membrane. It carries out the reaction Na(+)(in) = Na(+)(out). Originally identified and characterized by its inhibition by the diuretic drug amiloride. Functionally, this is one of the three pore-forming subunits of the heterotrimeric epithelial sodium channel (ENaC), a critical regulator of sodium balance and fluid homeostasis. ENaC operates in epithelial tissues, where it mediates the electrodiffusion of sodium ions from extracellular fluid through the apical membrane of cells, with water following osmotically. It plays a key role in maintaining sodium homeostasis through electrogenic sodium reabsorption in the kidneys. This subunit is not essential for ENaC function in airway surface liquid homeostasis and proper mucus clearance. In Mus musculus (Mouse), this protein is Epithelial sodium channel subunit beta.